The following is a 295-amino-acid chain: Ribose-phosphate pyrophosphokinase (295 aa).

ATP-binding positions include 46–48 (DGE) and 101–102 (RQ). Mg(2+) contacts are provided by histidine 132 and aspartate 171. Residue lysine 194 is part of the active site. Arginine 196 and aspartate 220 together coordinate D-ribose 5-phosphate.

Belongs to the ribose-phosphate pyrophosphokinase family. Class III (archaeal) subfamily. Requires Mg(2+) as cofactor.

Its subcellular location is the cytoplasm. The enzyme catalyses D-ribose 5-phosphate + ATP = 5-phospho-alpha-D-ribose 1-diphosphate + AMP + H(+). It participates in metabolic intermediate biosynthesis; 5-phospho-alpha-D-ribose 1-diphosphate biosynthesis; 5-phospho-alpha-D-ribose 1-diphosphate from D-ribose 5-phosphate (route I): step 1/1. Involved in the biosynthesis of the central metabolite phospho-alpha-D-ribosyl-1-pyrophosphate (PRPP) via the transfer of pyrophosphoryl group from ATP to 1-hydroxyl of ribose-5-phosphate (Rib-5-P). This Methanosarcina mazei (strain ATCC BAA-159 / DSM 3647 / Goe1 / Go1 / JCM 11833 / OCM 88) (Methanosarcina frisia) protein is Ribose-phosphate pyrophosphokinase.